The primary structure comprises 244 residues: MKIDLNADLGEGCASDAELLTLVSSANIACGFHAGDAQTMQACVREAIKNGVAIGAHPSFPDRENFGRSAMQLPPETVYAQTLYQIGALATIARAQGGVMRHVKPHGMLYNQAAKEAQLADAIARAVYACDPALVLVGLAGSELIRAGKQYGLTTREEVFADRGYQADGSLVPRSQPGALIENEEQALAQTLEMVQHGRVKSITGEWATVAAQTVCLHGDGEHALAFARRLRATFAKKGIVVAA.

It belongs to the LamB/PxpA family. As to quaternary structure, forms a complex composed of PxpA, PxpB and PxpC.

The enzyme catalyses 5-oxo-L-proline + ATP + 2 H2O = L-glutamate + ADP + phosphate + H(+). Functionally, catalyzes the cleavage of 5-oxoproline to form L-glutamate coupled to the hydrolysis of ATP to ADP and inorganic phosphate. This is 5-oxoprolinase subunit A from Shigella flexneri.